The following is a 131-amino-acid chain: Small ribosomal subunit protein uS8 (131 aa).

Belongs to the universal ribosomal protein uS8 family. Part of the 30S ribosomal subunit. Contacts proteins S5 and S12.

Functionally, one of the primary rRNA binding proteins, it binds directly to 16S rRNA central domain where it helps coordinate assembly of the platform of the 30S subunit. The chain is Small ribosomal subunit protein uS8 from Ralstonia nicotianae (strain ATCC BAA-1114 / GMI1000) (Ralstonia solanacearum).